Consider the following 291-residue polypeptide: Transcription factor TYE7 (291 aa).

The tract at residues 89–109 (FPTDQFFSNPSSYSHSPEVSS) is disordered. Low complexity predominate over residues 96–109 (SNPSSYSHSPEVSS). Position 104 is a phosphoserine (serine 104). A bHLH domain is found at 180–265 (FQKQAHNKIE…EKAVDYILYL (86 aa)). Residues histidine 185, glutamate 189, and arginine 193 each contribute to the DNA site. Positions 221–245 (DSVKKQDEDGAETAATTPLPSAAAT) are disordered. Over residues 233-245 (TAATTPLPSAAAT) the composition is skewed to low complexity. Phosphothreonine is present on threonine 237.

In terms of assembly, homodimer. Efficient DNA binding requires dimerization with another bHLH protein.

Its subcellular location is the nucleus. In terms of biological role, transcriptional activator of glycolytic gene expression, such as enolase genes (ENO1 and ENO2), glyceraldehyde-3-phosphate dehydrogenase gene (TDH), phosphoglycerate kinase (PGK1), phosphoglycerate mutase (PGM1), pyruvate kinase (PYK1) and triosephosphate isomerase (TPI1) genes. Binds DNA on E-box motifs: 5'-CANNTG-3'. In response to adenylic nucleotide reduction, activates Ty1 mRNA transcription, possibly by controlling Ty1 antisense transcription. Acts as a cell cycle transcription factor. Its function may also be linked to sulfur metabolism and the cross-regulation between phosphate and sulfate metabolism. The chain is Transcription factor TYE7 from Saccharomyces cerevisiae (strain ATCC 204508 / S288c) (Baker's yeast).